Here is a 153-residue protein sequence, read N- to C-terminus: Ribosome maturation factor RimP (153 aa).

Belongs to the RimP family.

It is found in the cytoplasm. Functionally, required for maturation of 30S ribosomal subunits. The protein is Ribosome maturation factor RimP of Rippkaea orientalis (strain PCC 8801 / RF-1) (Cyanothece sp. (strain PCC 8801)).